We begin with the raw amino-acid sequence, 452 residues long: Phosphoglucosamine mutase (452 aa).

The active-site Phosphoserine intermediate is Ser103. Mg(2+) is bound by residues Ser103, Asp244, Asp246, and Asp248. The residue at position 103 (Ser103) is a Phosphoserine.

The protein belongs to the phosphohexose mutase family. Mg(2+) is required as a cofactor. In terms of processing, activated by phosphorylation.

The catalysed reaction is alpha-D-glucosamine 1-phosphate = D-glucosamine 6-phosphate. In terms of biological role, catalyzes the conversion of glucosamine-6-phosphate to glucosamine-1-phosphate. The sequence is that of Phosphoglucosamine mutase from Rhodospirillum rubrum (strain ATCC 11170 / ATH 1.1.1 / DSM 467 / LMG 4362 / NCIMB 8255 / S1).